We begin with the raw amino-acid sequence, 95 residues long: Co-chaperonin GroES (95 aa).

It belongs to the GroES chaperonin family. As to quaternary structure, heptamer of 7 subunits arranged in a ring. Interacts with the chaperonin GroEL.

It is found in the cytoplasm. Together with the chaperonin GroEL, plays an essential role in assisting protein folding. The GroEL-GroES system forms a nano-cage that allows encapsulation of the non-native substrate proteins and provides a physical environment optimized to promote and accelerate protein folding. GroES binds to the apical surface of the GroEL ring, thereby capping the opening of the GroEL channel. The polypeptide is Co-chaperonin GroES (Staphylococcus saprophyticus subsp. saprophyticus (strain ATCC 15305 / DSM 20229 / NCIMB 8711 / NCTC 7292 / S-41)).